Here is a 498-residue protein sequence, read N- to C-terminus: Probable cytosol aminopeptidase (498 aa).

Mn(2+)-binding residues include K262 and D267. K274 is an active-site residue. Positions 285, 344, and 346 each coordinate Mn(2+). R348 is a catalytic residue.

The protein belongs to the peptidase M17 family. Mn(2+) is required as a cofactor.

It is found in the cytoplasm. It catalyses the reaction Release of an N-terminal amino acid, Xaa-|-Yaa-, in which Xaa is preferably Leu, but may be other amino acids including Pro although not Arg or Lys, and Yaa may be Pro. Amino acid amides and methyl esters are also readily hydrolyzed, but rates on arylamides are exceedingly low.. The catalysed reaction is Release of an N-terminal amino acid, preferentially leucine, but not glutamic or aspartic acids.. In terms of biological role, presumably involved in the processing and regular turnover of intracellular proteins. Catalyzes the removal of unsubstituted N-terminal amino acids from various peptides. This Phytoplasma mali (strain AT) protein is Probable cytosol aminopeptidase.